Here is a 397-residue protein sequence, read N- to C-terminus: T-box transcription factor TBX19 (397 aa).

Residues 48-216 (LWQRFREVTN…YNPFAKAFLD (169 aa)) constitute a DNA-binding region (T-box). Positions 220–248 (RNHPKDAPEAASEGQHMTYSHSPQAPHGC) are disordered.

The protein localises to the nucleus. May be involved in the initial formation of the chordamesoderm. In Gallus gallus (Chicken), this protein is T-box transcription factor TBX19.